The following is a 467-amino-acid chain: Argininosuccinate lyase (467 aa).

It belongs to the lyase 1 family. Argininosuccinate lyase subfamily.

Its subcellular location is the cytoplasm. It catalyses the reaction 2-(N(omega)-L-arginino)succinate = fumarate + L-arginine. Its pathway is amino-acid biosynthesis; L-arginine biosynthesis; L-arginine from L-ornithine and carbamoyl phosphate: step 3/3. This Anaeromyxobacter dehalogenans (strain 2CP-C) protein is Argininosuccinate lyase.